The sequence spans 332 residues: MEQKYSLLSHNTFGIDVSAACFLEYASVDELRGLIGSGRVTSPYLHIGGGSNLLFTKDYEGTILHSRIGGVEVVAETDDDIVVRVGAGVVWDDFVDYCVQRHWYGVENLSLIPGEVGASAVQNIGAYGVEVKDLIVRVETLNIEGKEHVYDVTECGYSYRDSIFKRPENKSVFVTYVSFRLSKREHYTLDYGTIRRELEKYPGVTLDVVRRVIIAIREEKLPDPRVMGNAGSFFMNPIVGREQFEALQAEYPQMPFYEIDTDRVKIPAGWMIDQCGWKGKALGPAAVHDKQALVLVNRGGAKGADVIALSDAVRASVRAKFGIDIHPEVNFI.

The region spanning 15–184 (IDVSAACFLE…TYVSFRLSKR (170 aa)) is the FAD-binding PCMH-type domain. Residue Arg-160 is part of the active site. The active-site Proton donor is Ser-232. Residue Glu-328 is part of the active site.

The protein belongs to the MurB family. The cofactor is FAD.

It is found in the cytoplasm. It carries out the reaction UDP-N-acetyl-alpha-D-muramate + NADP(+) = UDP-N-acetyl-3-O-(1-carboxyvinyl)-alpha-D-glucosamine + NADPH + H(+). The protein operates within cell wall biogenesis; peptidoglycan biosynthesis. Cell wall formation. This is UDP-N-acetylenolpyruvoylglucosamine reductase from Bacteroides fragilis (strain YCH46).